A 158-amino-acid chain; its full sequence is Naphthalene 1,2-dioxygenase system, small oxygenase component (158 aa).

This sequence belongs to the bacterial ring-hydroxylating dioxygenase beta subunit family. The naphthalene dioxygenase (NDO) multicomponent enzyme system is composed of an electron transfer component and a dioxygenase component (iron sulfur protein (ISP)). The electron transfer component is composed of a ferredoxin reductase (NdoR) and a ferredoxin (NdoA), and the dioxygenase component is formed of a heterohexamer (trimer of heterodimers) of three large alpha subunits (NdoB) and three small beta subunits (NdoC).

It functions in the pathway aromatic compound metabolism; naphthalene degradation. Its function is as follows. Component of the naphthalene dioxygenase (NDO) multicomponent enzyme system which catalyzes the incorporation of both atoms of molecular oxygen into naphthalene to form cis-(1R,2S)-dihydroxy-1,2-dihydronaphthalene. The beta subunit seems to have a structural role in the holoenzyme. In Pseudomonas fluorescens, this protein is Naphthalene 1,2-dioxygenase system, small oxygenase component.